The following is a 273-amino-acid chain: Transposable element Tcb2 transposase (273 aa).

Belongs to the transposase 5 family.

Its subcellular location is the nucleus. Probably essential for transposable element Tcb2 transposition. This Caenorhabditis briggsae protein is Transposable element Tcb2 transposase.